The chain runs to 273 residues: 4-hydroxy-tetrahydrodipicolinate reductase (273 aa).

NAD(+)-binding positions include 12–17 (GAGGRM) and E38. R39 serves as a coordination point for NADP(+). NAD(+)-binding positions include 102–104 (GTT) and 126–129 (AANF). Residue H159 is the Proton donor/acceptor of the active site. Residue H160 coordinates (S)-2,3,4,5-tetrahydrodipicolinate. K163 acts as the Proton donor in catalysis. Residue 169–170 (GT) participates in (S)-2,3,4,5-tetrahydrodipicolinate binding.

Belongs to the DapB family. In terms of assembly, homotetramer.

Its subcellular location is the cytoplasm. It catalyses the reaction (S)-2,3,4,5-tetrahydrodipicolinate + NAD(+) + H2O = (2S,4S)-4-hydroxy-2,3,4,5-tetrahydrodipicolinate + NADH + H(+). It carries out the reaction (S)-2,3,4,5-tetrahydrodipicolinate + NADP(+) + H2O = (2S,4S)-4-hydroxy-2,3,4,5-tetrahydrodipicolinate + NADPH + H(+). It functions in the pathway amino-acid biosynthesis; L-lysine biosynthesis via DAP pathway; (S)-tetrahydrodipicolinate from L-aspartate: step 4/4. Functionally, catalyzes the conversion of 4-hydroxy-tetrahydrodipicolinate (HTPA) to tetrahydrodipicolinate. The polypeptide is 4-hydroxy-tetrahydrodipicolinate reductase (Yersinia pestis bv. Antiqua (strain Antiqua)).